Reading from the N-terminus, the 259-residue chain is Protein odd-skipped-related 1 (259 aa).

3 C2H2-type zinc fingers span residues 168–190, 196–218, and 224–246; these read FVCKFCGRHFTKSYNLLIHERTH, YTCDICHKAFRRQDHLRDHRYIH, and FKCQECGKGFCQSRTLAVHKTLH.

The protein belongs to the Odd C2H2-type zinc-finger protein family. In terms of tissue distribution, at early gastrula stage, expressed in the involuting mesoderm and endoderm. During neurulation, expressed in the pronephric primordium, following expression of osr2. During tailbud (stage 35), expressed in the rectal diverticulum and in the kidney ducts.

Its subcellular location is the nucleus. Functionally, transcriptional repressor. Required for pronephric kidney development. In Xenopus laevis (African clawed frog), this protein is Protein odd-skipped-related 1.